A 201-amino-acid polypeptide reads, in one-letter code: LexA repressor (201 aa).

A DNA-binding region (H-T-H motif) is located at residues 28–48 (LREIGGHLGINGTLGVMKHLD). Active-site for autocatalytic cleavage activity residues include Ser120 and Lys157.

Belongs to the peptidase S24 family. As to quaternary structure, homodimer.

The catalysed reaction is Hydrolysis of Ala-|-Gly bond in repressor LexA.. Represses a number of genes involved in the response to DNA damage (SOS response), including recA and lexA. In the presence of single-stranded DNA, RecA interacts with LexA causing an autocatalytic cleavage which disrupts the DNA-binding part of LexA, leading to derepression of the SOS regulon and eventually DNA repair. This is LexA repressor from Geotalea uraniireducens (strain Rf4) (Geobacter uraniireducens).